Consider the following 88-residue polypeptide: Phosphocarrier protein HPr (88 aa).

The HPr domain occupies 1–88; it reads MAEKTFKVVS…DTLAKEGLAE (88 aa). Phosphoserine is present on Ser12. His15 (pros-phosphohistidine intermediate) is an active-site residue. Ser46 bears the Phosphoserine; by HPrK/P mark.

It belongs to the HPr family.

It is found in the cytoplasm. Its activity is regulated as follows. Phosphorylation on Ser-46 inhibits the phosphoryl transfer from enzyme I to HPr. In terms of biological role, general (non sugar-specific) component of the phosphoenolpyruvate-dependent sugar phosphotransferase system (sugar PTS). This major carbohydrate active-transport system catalyzes the phosphorylation of incoming sugar substrates concomitantly with their translocation across the cell membrane. The phosphoryl group from phosphoenolpyruvate (PEP) is transferred to the phosphoryl carrier protein HPr by enzyme I. Phospho-HPr then transfers it to the PTS EIIA domain. Functionally, P-Ser-HPr interacts with the catabolite control protein A (CcpA), forming a complex that binds to DNA at the catabolite response elements cre, operator sites preceding a large number of catabolite-regulated genes. Thus, P-Ser-HPr is a corepressor in carbon catabolite repression (CCR), a mechanism that allows bacteria to coordinate and optimize the utilization of available carbon sources. P-Ser-HPr also plays a role in inducer exclusion, in which it probably interacts with several non-PTS permeases and inhibits their transport activity. This chain is Phosphocarrier protein HPr (ptsH), found in Geobacillus stearothermophilus (Bacillus stearothermophilus).